Reading from the N-terminus, the 266-residue chain is Stomatin homolog PH1511 (266 aa).

Residues 7-27 form a helical membrane-spanning segment; that stretch reads FFVTSIILLFILIFLASAIKI. 2 coiled-coil regions span residues 125 to 152 and 178 to 213; these read GQAH…EATD and RQAE…ISEH.

This sequence belongs to the band 7/mec-2 family. In terms of assembly, homotrimer. Interacts with PH1510 and is cleaved by PH1510.

The protein resides in the membrane. The polypeptide is Stomatin homolog PH1511 (Pyrococcus horikoshii (strain ATCC 700860 / DSM 12428 / JCM 9974 / NBRC 100139 / OT-3)).